Reading from the N-terminus, the 199-residue chain is Holliday junction branch migration complex subunit RuvA (199 aa).

The interval 1 to 64 is domain I; that stretch reads MIARLTGMLA…EDAISLFGFR (64 aa). A domain II region spans residues 65 to 143; that stretch reads TVAEKEFFQV…KMDVAPSTKE (79 aa). The tract at residues 144–154 is flexible linker; the sequence is AAPSEAPPEVA. Residues 154–199 are domain III; that stretch reads ADDVASALVNLGYKEAVVRKVLAEMAIESGASTEAVLRQALKILMK.

It belongs to the RuvA family. As to quaternary structure, homotetramer. Forms an RuvA(8)-RuvB(12)-Holliday junction (HJ) complex. HJ DNA is sandwiched between 2 RuvA tetramers; dsDNA enters through RuvA and exits via RuvB. An RuvB hexamer assembles on each DNA strand where it exits the tetramer. Each RuvB hexamer is contacted by two RuvA subunits (via domain III) on 2 adjacent RuvB subunits; this complex drives branch migration. In the full resolvosome a probable DNA-RuvA(4)-RuvB(12)-RuvC(2) complex forms which resolves the HJ.

It localises to the cytoplasm. Functionally, the RuvA-RuvB-RuvC complex processes Holliday junction (HJ) DNA during genetic recombination and DNA repair, while the RuvA-RuvB complex plays an important role in the rescue of blocked DNA replication forks via replication fork reversal (RFR). RuvA specifically binds to HJ cruciform DNA, conferring on it an open structure. The RuvB hexamer acts as an ATP-dependent pump, pulling dsDNA into and through the RuvAB complex. HJ branch migration allows RuvC to scan DNA until it finds its consensus sequence, where it cleaves and resolves the cruciform DNA. The polypeptide is Holliday junction branch migration complex subunit RuvA (Geobacter metallireducens (strain ATCC 53774 / DSM 7210 / GS-15)).